The following is a 266-amino-acid chain: Putative deoxyribonuclease tatdn3 (266 aa).

Residues His9, His11, Glu103, His143, His166, and Asp214 each coordinate Zn(2+).

This sequence belongs to the metallo-dependent hydrolases superfamily. TatD-type hydrolase family. It depends on Mn(2+) as a cofactor. Ca(2+) is required as a cofactor. The cofactor is Mg(2+). Zn(2+) serves as cofactor.

Its subcellular location is the nucleus. Its activity is regulated as follows. The 3'-exonuclease activity is sensitive to the metal ion present in the active site, whereas the AP endodeoxyribonuclease activity is observed in a variety of divalent metal cofactors. 3'-exoxonuclease activity is suppressed in the presence of Ca(2+), Zn(2+) and Ni(2+). Functionally, exhibits 3'-exonuclease activities and apurinic/apyrimidinic (AP) endonuclease (in vitro). Show preferential AP endonuclease activity on double-stranded DNA substrates and 3'- exonuclease activity on single-stranded DNA. In Danio rerio (Zebrafish), this protein is Putative deoxyribonuclease tatdn3 (tatdn3).